The chain runs to 542 residues: MAGATSSIIRENDFEDELAESMQSYNRETADKLALTRTESVKPEPEITAPPHSRFSRSFKTVLIAQCAFTGFFSTIAGAIYYPVLSVIERKFDIDEELVNVTVVVYFVFQGLAPTFMGGFADSLGRRPVVLVAIVIYFGACIGLACAQTYAQIIVLRCLQAAGISPVIAINSGIMGDVTTRAERGGYVGYVAGFQVLGSAFGALIGAGLSSRWGWRAIFWFLAIGSGICFLASFLILPETKRNISGNGSVTPKSYLNRAPILVLPTVRKSLHLDNPDYETLELPTQLNLLAPFKILKAYEICILMLVAGLQFAMYTTHLTALSTALSKQYHLTVAKVGLCYLPSGICTLCSIVIAGRYLNWNYRRRLKYYQNWLGKKRSKLLEEHDNDLNLVQRIIENDPKYTFNIFKARLQPAFVTLLLSSSGFCAYGWCITVKAPLAAVLCMSGFASLFSNCILTFSTTLIVDLFPTKTSTATGCLNLFRCILSAVFIAALSKMVEKMKFGGVFTFLGALTSSSSILLFILLRKGKELAFKRKKQELGVN.

At methionine 1–cysteine 67 the chain is on the cytoplasmic side. Residue serine 21 is modified to Phosphoserine. The residue at position 38 (threonine 38) is a Phosphothreonine. The residue at position 40 (serine 40) is a Phosphoserine. Residues alanine 68–isoleucine 88 traverse the membrane as a helical segment. Residues glutamate 89–asparagine 100 lie on the Extracellular side of the membrane. Residues valine 101–alanine 121 form a helical membrane-spanning segment. Over aspartate 122 to arginine 127 the chain is Cytoplasmic. Residues proline 128–glutamine 148 form a helical membrane-spanning segment. A topological domain (extracellular) is located at residue threonine 149. The helical transmembrane segment at tyrosine 150–isoleucine 170 threads the bilayer. Topologically, residues asparagine 171–tyrosine 187 are cytoplasmic. Residues valine 188 to glycine 208 traverse the membrane as a helical segment. Residues leucine 209–arginine 216 lie on the Extracellular side of the membrane. Residues alanine 217–leucine 237 traverse the membrane as a helical segment. Residues proline 238–glutamate 300 are Cytoplasmic-facing. The chain crosses the membrane as a helical span at residues isoleucine 301–alanine 321. The Extracellular segment spans residues leucine 322–threonine 333. Residues valine 334–isoleucine 354 traverse the membrane as a helical segment. At alanine 355 to proline 413 the chain is on the cytoplasmic side. Residues alanine 414–valine 434 form a helical membrane-spanning segment. Over lysine 435–proline 437 the chain is Extracellular. Residues leucine 438–phenylalanine 458 traverse the membrane as a helical segment. The Cytoplasmic portion of the chain corresponds to serine 459–serine 472. Residues threonine 473–leucine 493 traverse the membrane as a helical segment. The Extracellular portion of the chain corresponds to serine 494 to glycine 503. The helical transmembrane segment at glycine 504 to leucine 524 threads the bilayer. Topologically, residues arginine 525–asparagine 542 are cytoplasmic.

It belongs to the major facilitator superfamily. CAR1 family.

It is found in the cell membrane. In terms of biological role, multidrug resistance transporter involved in resistance and adaptation to quinidine and to the herbicide barban (4-chloro-2-butynyl [3-chlorophenyl] carbamate). Implicated in potassium uptake. This Saccharomyces cerevisiae (strain ATCC 204508 / S288c) (Baker's yeast) protein is Quinidine resistance protein 2 (QDR2).